Reading from the N-terminus, the 172-residue chain is Large ribosomal subunit protein uL10 (172 aa).

Belongs to the universal ribosomal protein uL10 family. In terms of assembly, part of the ribosomal stalk of the 50S ribosomal subunit. The N-terminus interacts with L11 and the large rRNA to form the base of the stalk. The C-terminus forms an elongated spine to which L12 dimers bind in a sequential fashion forming a multimeric L10(L12)X complex.

Functionally, forms part of the ribosomal stalk, playing a central role in the interaction of the ribosome with GTP-bound translation factors. This Mesorhizobium japonicum (strain LMG 29417 / CECT 9101 / MAFF 303099) (Mesorhizobium loti (strain MAFF 303099)) protein is Large ribosomal subunit protein uL10.